The primary structure comprises 196 residues: Peptidyl-tRNA hydrolase (196 aa).

TRNA is bound at residue Tyr-18. The Proton acceptor role is filled by His-23. The tRNA site is built by Phe-69, Asn-71, and Asn-117.

The protein belongs to the PTH family. In terms of assembly, monomer.

The protein localises to the cytoplasm. The enzyme catalyses an N-acyl-L-alpha-aminoacyl-tRNA + H2O = an N-acyl-L-amino acid + a tRNA + H(+). Functionally, hydrolyzes ribosome-free peptidyl-tRNAs (with 1 or more amino acids incorporated), which drop off the ribosome during protein synthesis, or as a result of ribosome stalling. Catalyzes the release of premature peptidyl moieties from peptidyl-tRNA molecules trapped in stalled 50S ribosomal subunits, and thus maintains levels of free tRNAs and 50S ribosomes. The protein is Peptidyl-tRNA hydrolase of Vibrio parahaemolyticus serotype O3:K6 (strain RIMD 2210633).